We begin with the raw amino-acid sequence, 303 residues long: ATP phosphoribosyltransferase (303 aa).

Belongs to the ATP phosphoribosyltransferase family. Long subfamily. Mg(2+) is required as a cofactor.

It localises to the cytoplasm. It carries out the reaction 1-(5-phospho-beta-D-ribosyl)-ATP + diphosphate = 5-phospho-alpha-D-ribose 1-diphosphate + ATP. The protein operates within amino-acid biosynthesis; L-histidine biosynthesis; L-histidine from 5-phospho-alpha-D-ribose 1-diphosphate: step 1/9. With respect to regulation, feedback inhibited by histidine. Catalyzes the condensation of ATP and 5-phosphoribose 1-diphosphate to form N'-(5'-phosphoribosyl)-ATP (PR-ATP). Has a crucial role in the pathway because the rate of histidine biosynthesis seems to be controlled primarily by regulation of HisG enzymatic activity. This Haemophilus influenzae (strain PittEE) protein is ATP phosphoribosyltransferase.